We begin with the raw amino-acid sequence, 837 residues long: Probable aldehyde oxidase 4 (837 aa).

The 2Fe-2S ferredoxin-type domain occupies E9–L98. [2Fe-2S] cluster contacts are provided by C50, C55, C58, and C80. An FAD-binding PCMH-type domain is found at I240 to S427.

It belongs to the xanthine dehydrogenase family. As to quaternary structure, aldehyde oxidases (AO) are homodimers and heterodimers of AO subunits. [2Fe-2S] cluster is required as a cofactor. Requires FAD as cofactor. The cofactor is Mo-molybdopterin.

It catalyses the reaction an aldehyde + O2 + H2O = a carboxylate + H2O2 + H(+). The protein is Probable aldehyde oxidase 4 of Oryza sativa subsp. japonica (Rice).